Here is a 536-residue protein sequence, read N- to C-terminus: Phosphoenolpyruvate carboxykinase (ATP) (536 aa).

Residues Arg-61, Tyr-195, and Lys-201 each coordinate substrate. Residues Lys-201, His-220, and Gly-236–Thr-244 contribute to the ATP site. Residues Lys-201 and His-220 each contribute to the Mn(2+) site. Asp-257 lines the Mn(2+) pocket. 3 residues coordinate ATP: Glu-285, Arg-323, and Thr-448. Arg-323 serves as a coordination point for substrate.

This sequence belongs to the phosphoenolpyruvate carboxykinase (ATP) family. The cofactor is Mn(2+).

It localises to the cytoplasm. The catalysed reaction is oxaloacetate + ATP = phosphoenolpyruvate + ADP + CO2. Its pathway is carbohydrate biosynthesis; gluconeogenesis. Functionally, involved in the gluconeogenesis. Catalyzes the conversion of oxaloacetate (OAA) to phosphoenolpyruvate (PEP) through direct phosphoryl transfer between the nucleoside triphosphate and OAA. This is Phosphoenolpyruvate carboxykinase (ATP) from Methylobacterium sp. (strain 4-46).